Consider the following 222-residue polypeptide: GMP/IMP nucleotidase YrfG (222 aa).

The Nucleophile role is filled by Asp-9. Positions 9 and 11 each coordinate Mg(2+). Residues 9–11 (DVD) and Lys-149 each bind substrate. Asp-174 is a Mg(2+) binding site.

It belongs to the HAD-like hydrolase superfamily. Mg(2+) serves as cofactor. The cofactor is Mn(2+). It depends on Co(2+) as a cofactor. Requires Zn(2+) as cofactor.

The catalysed reaction is a ribonucleoside 5'-phosphate + H2O = a ribonucleoside + phosphate. Catalyzes the dephosphorylation of different purine nucleotides (GMP and IMP). Also hydrolyzes flavin mononucleotide (FMN). This chain is GMP/IMP nucleotidase YrfG (yrfG), found in Escherichia coli (strain K12).